Reading from the N-terminus, the 388-residue chain is Phosphopentomutase (388 aa).

Mn(2+) is bound by residues Asp11, Asp283, His288, Asp324, His325, and His336.

Belongs to the phosphopentomutase family. Requires Mn(2+) as cofactor.

Its subcellular location is the cytoplasm. The enzyme catalyses 2-deoxy-alpha-D-ribose 1-phosphate = 2-deoxy-D-ribose 5-phosphate. It carries out the reaction alpha-D-ribose 1-phosphate = D-ribose 5-phosphate. The protein operates within carbohydrate degradation; 2-deoxy-D-ribose 1-phosphate degradation; D-glyceraldehyde 3-phosphate and acetaldehyde from 2-deoxy-alpha-D-ribose 1-phosphate: step 1/2. Its function is as follows. Isomerase that catalyzes the conversion of deoxy-ribose 1-phosphate (dRib-1-P) and ribose 1-phosphate (Rib-1-P) to deoxy-ribose 5-phosphate (dRib-5-P) and ribose 5-phosphate (Rib-5-P), respectively. The polypeptide is Phosphopentomutase (Anaeromyxobacter dehalogenans (strain 2CP-1 / ATCC BAA-258)).